A 123-amino-acid chain; its full sequence is Ribonuclease P protein component (123 aa).

The protein belongs to the RnpA family. In terms of assembly, consists of a catalytic RNA component (M1 or rnpB) and a protein subunit.

It catalyses the reaction Endonucleolytic cleavage of RNA, removing 5'-extranucleotides from tRNA precursor.. Its function is as follows. RNaseP catalyzes the removal of the 5'-leader sequence from pre-tRNA to produce the mature 5'-terminus. It can also cleave other RNA substrates such as 4.5S RNA. The protein component plays an auxiliary but essential role in vivo by binding to the 5'-leader sequence and broadening the substrate specificity of the ribozyme. This Streptococcus pneumoniae (strain Hungary19A-6) protein is Ribonuclease P protein component.